A 316-amino-acid polypeptide reads, in one-letter code: Fe-S cluster assembly protein DRE2 (316 aa).

Residues 4–156 form an N-terminal SAM-like domain region; sequence SMPVATTVAA…KPQHVASTSV (153 aa). The linker stretch occupies residues 157 to 202; the sequence is PLKSRQPGALLNRKKTDPAKKQALWALSSPSTPKIDPEALLTAEDK. Cysteine 209, cysteine 223, cysteine 226, and cysteine 228 together coordinate [2Fe-2S] cluster. A fe-S binding site A region spans residues 209–228; that stretch reads CEPVRSSAPRRKKACKSCSC. [4Fe-4S] cluster contacts are provided by cysteine 279, cysteine 282, cysteine 290, and cysteine 293. 2 short sequence motifs (cx2C motif) span residues 279 to 282 and 290 to 293; these read CGSC and CAGC. Residues 279-293 are fe-S binding site B; sequence CGSCFLGDAFRCAGC.

It belongs to the anamorsin family. As to quaternary structure, monomer. Interacts with TAH18. Interacts with MIA40. [2Fe-2S] cluster is required as a cofactor. [4Fe-4S] cluster serves as cofactor.

Its subcellular location is the cytoplasm. It is found in the mitochondrion intermembrane space. Component of the cytosolic iron-sulfur (Fe-S) protein assembly (CIA) machinery required for the maturation of extramitochondrial Fe-S proteins. Part of an electron transfer chain functioning in an early step of cytosolic Fe-S biogenesis, facilitating the de novo assembly of a [4Fe-4S] cluster on the scaffold complex CFD1-NBP35. Electrons are transferred to DRE2 from NADPH via the FAD- and FMN-containing protein TAH18. TAH18-DRE2 are also required for the assembly of the diferric tyrosyl radical cofactor of ribonucleotide reductase (RNR), probably by providing electrons for reduction during radical cofactor maturation in the catalytic small subunit RNR2. In Laccaria bicolor (strain S238N-H82 / ATCC MYA-4686) (Bicoloured deceiver), this protein is Fe-S cluster assembly protein DRE2.